The primary structure comprises 261 residues: Protein OSB1, mitochondrial (261 aa).

The N-terminal 28 residues, 1–28, are a transit peptide targeting the mitochondrion; sequence MNTFFKLGSLIQRTASQISSSFPKSRFF. In terms of domain architecture, SSB spans 55–155; that stretch reads VNSVSLMGFV…VKVAEVNYVA (101 aa). The PDF region stretch occupies residues 189–238; it reads WQVFFSNPYDWWDNRRNKKNPKQPDFKHKDTGEALWLCSDLPDWITRRLE.

As to expression, expressed in root elongation zone and in gametophytic cells.

The protein resides in the mitochondrion. Regulates mitochondrial DNA recombination. Represses homologous recombination, preventing mitochondrial genome instability and unbalanced transmission of alternative mtDNA configurations. Binds preferentially single-stranded DNA. Does not bind to RNA. This is Protein OSB1, mitochondrial (OSB1) from Arabidopsis thaliana (Mouse-ear cress).